Consider the following 104-residue polypeptide: Large ribosomal subunit protein uL23 (104 aa).

It belongs to the universal ribosomal protein uL23 family. In terms of assembly, part of the 50S ribosomal subunit. Contacts protein L29, and trigger factor when it is bound to the ribosome.

Functionally, one of the early assembly proteins it binds 23S rRNA. One of the proteins that surrounds the polypeptide exit tunnel on the outside of the ribosome. Forms the main docking site for trigger factor binding to the ribosome. This chain is Large ribosomal subunit protein uL23, found in Paraburkholderia phytofirmans (strain DSM 17436 / LMG 22146 / PsJN) (Burkholderia phytofirmans).